We begin with the raw amino-acid sequence, 94 residues long: Selenoprotein K (94 aa).

Residues 20–42 (VSFLTDFFWGIAEFVVFFFKTLL) traverse the membrane as a helical segment. The disordered stretch occupies residues 46 to 94 (VKKRRGYGSSSDSRYDDGRGPPGNPPRRMGRISHLRGPSPPPMAGGUGR). Position 92 (Sec92) is a non-standard amino acid, selenocysteine.

The protein belongs to the selenoprotein K family. Interacts with DERL1, DERL2, DERL3 and SELENOS. The SELENOK-SELENOS complex interacts with VCP. Interacts with ZDHHC6. Cleaved by CAPN2/m-calpain in resting macrophages but not in activated macrophages. Macrophage activation up-regulates expression of the calpain inhibitor CAST/calpastatin, resulting in inhibition of CAPN2 activity. In terms of processing, truncated SELENOK proteins produced by failed UGA/Sec decoding are ubiquitinated by the CRL2(KLHDC2) complex, which recognizes the diglycine (Gly-Gly) at the C-terminus of truncated SELENOK proteins. In terms of tissue distribution, high expression in spleen and intestine (at protein level). Expressed in a range of immune cells including T and B-cells and also in myeloid cells including macrophages, neutrophils and dendritic cells (at protein level).

The protein resides in the endoplasmic reticulum membrane. It is found in the cell membrane. Functionally, required for Ca(2+) flux in immune cells and plays a role in T-cell proliferation and in T-cell and neutrophil migration. Involved in endoplasmic reticulum-associated degradation (ERAD) of soluble glycosylated proteins. Required for palmitoylation and cell surface expression of CD36 and involved in macrophage uptake of low-density lipoprotein and in foam cell formation. Together with ZDHHC6, required for palmitoylation of ITPR1 in immune cells, leading to regulate ITPR1 stability and function. Plays a role in protection of cells from ER stress-induced apoptosis. Protects cells from oxidative stress when overexpressed in cardiomyocytes. The sequence is that of Selenoprotein K from Mus musculus (Mouse).